The primary structure comprises 53 residues: Large ribosomal subunit protein bL33A (53 aa).

It belongs to the bacterial ribosomal protein bL33 family.

This chain is Large ribosomal subunit protein bL33A, found in Mycoplasmoides gallisepticum (strain R(low / passage 15 / clone 2)) (Mycoplasma gallisepticum).